Here is a 331-residue protein sequence, read N- to C-terminus: Geranylgeranyl transferase type-2 subunit beta (331 aa).

Residue glycine 2 is modified to N-acetylglycine. At threonine 3 the chain carries Phosphothreonine. PFTB repeat units follow at residues 20–61, 68–109, 116–157, 164–205, 212–253, and 260–302; these read LEKH…DLMG, REEI…TLYD, INKV…ALLG, VEKA…AITS, SDLL…KIIG, and REKL…SLLG. A geranylgeranyl diphosphate-binding site is contributed by 190-192; it reads HAG. Zn(2+)-binding residues include aspartate 238 and cysteine 240. 241 to 244 is a geranylgeranyl diphosphate binding site; the sequence is YSWW. Histidine 290 is a binding site for Zn(2+).

This sequence belongs to the protein prenyltransferase subunit beta family. Heterotrimer composed of RABGGTA, RABGGTB and CHM; within this trimer, RABGGTA and RABGGTB form the catalytic component B, while CHM (component A) mediates peptide substrate binding. The Rab GGTase dimer (RGGT) interacts with CHM (component A) prior to Rab protein binding; the association is stabilized by geranylgeranyl pyrophosphate (GGpp). The CHM:RGGT:Rab complex is destabilized by GGpp. Interaction of RABGGTB with prenylated PTP4A2 precludes its association with RABGGTA and inhibits enzyme activity. Interacts with CHODL. Interacts with non-phosphorylated form of RAB8A; phosphorylation of RAB8A at 'Thr-72' disrupts this interaction. Zn(2+) serves as cofactor.

It catalyses the reaction geranylgeranyl diphosphate + L-cysteinyl-[protein] = S-geranylgeranyl-L-cysteinyl-[protein] + diphosphate. With respect to regulation, the enzymatic reaction requires the aid of a Rab escort protein (also called component A). In terms of biological role, catalyzes the transfer of a geranylgeranyl moiety from geranylgeranyl diphosphate to both cysteines of Rab proteins with the C-terminal sequence -XXCC, -XCXC and -CCXX, such as RAB1A, RAB3A, RAB5A and RAB7A. This Bos taurus (Bovine) protein is Geranylgeranyl transferase type-2 subunit beta (RABGGTB).